We begin with the raw amino-acid sequence, 99 residues long: Integration host factor subunit alpha (99 aa).

It belongs to the bacterial histone-like protein family. Heterodimer of an alpha and a beta chain.

In terms of biological role, this protein is one of the two subunits of integration host factor, a specific DNA-binding protein that functions in genetic recombination as well as in transcriptional and translational control. This chain is Integration host factor subunit alpha, found in Xylella fastidiosa (strain M12).